The sequence spans 131 residues: Fumarate reductase subunit C (131 aa).

3 consecutive transmembrane segments (helical) span residues 30–50 (EGTA…LFAL), 61–81 (IGFL…AAAL), and 110–130 (IKGL…VALF).

It belongs to the FrdC family. Part of an enzyme complex containing four subunits: a flavoprotein (FrdA), an iron-sulfur protein (FrdB), and two hydrophobic anchor proteins (FrdC and FrdD).

The protein resides in the cell inner membrane. In terms of biological role, two distinct, membrane-bound, FAD-containing enzymes are responsible for the catalysis of fumarate and succinate interconversion; fumarate reductase is used in anaerobic growth, and succinate dehydrogenase is used in aerobic growth. Anchors the catalytic components of the fumarate reductase complex to the cell inner membrane, binds quinones. This Klebsiella pneumoniae subsp. pneumoniae (strain ATCC 700721 / MGH 78578) protein is Fumarate reductase subunit C.